A 452-amino-acid chain; its full sequence is Glutamyl-tRNA(Gln) amidotransferase subunit A (452 aa).

Catalysis depends on charge relay system residues K56 and S131. Catalysis depends on S155, which acts as the Acyl-ester intermediate.

It belongs to the amidase family. GatA subfamily. Heterotrimer of A, B and C subunits.

The enzyme catalyses L-glutamyl-tRNA(Gln) + L-glutamine + ATP + H2O = L-glutaminyl-tRNA(Gln) + L-glutamate + ADP + phosphate + H(+). Its function is as follows. Allows the formation of correctly charged Gln-tRNA(Gln) through the transamidation of misacylated Glu-tRNA(Gln) in organisms which lack glutaminyl-tRNA synthetase. The reaction takes place in the presence of glutamine and ATP through an activated gamma-phospho-Glu-tRNA(Gln). The chain is Glutamyl-tRNA(Gln) amidotransferase subunit A from Campylobacter hominis (strain ATCC BAA-381 / DSM 21671 / CCUG 45161 / LMG 19568 / NCTC 13146 / CH001A).